A 1105-amino-acid chain; its full sequence is DNA polymerase delta catalytic subunit (1105 aa).

Residues 1-46 are disordered; it reads MSSGGRGGKRRGAPPPGPSGAAAKRAHPGGTPQPPPPAATAAAPVA. Residues C1015, C1018, C1030, and C1033 each coordinate Zn(2+). A CysA-type zinc finger spans residues 1015-1033; sequence CLGCKAVISGSNQTLCFHC. Residues C1062, C1065, C1075, and C1080 each coordinate [4Fe-4S] cluster. The CysB motif motif lies at 1062 to 1080; that stretch reads CQECQGSLHQDVLCTSRDC.

Belongs to the DNA polymerase type-B family. In terms of assembly, heterodimer with subunits of 125 kDa and 50 kDa. The 125 kDa subunit contains the polymerase active site and most likely the active site for the 3'-5' exonuclease activity. The cofactor is [4Fe-4S] cluster.

It is found in the nucleus. It carries out the reaction DNA(n) + a 2'-deoxyribonucleoside 5'-triphosphate = DNA(n+1) + diphosphate. This polymerase possesses two enzymatic activities: DNA synthesis (polymerase) and an exonucleolytic activity that degrades single-stranded DNA in the 3'- to 5'-direction. The protein is DNA polymerase delta catalytic subunit (POLD1) of Oryza sativa subsp. japonica (Rice).